The primary structure comprises 317 residues: Methionyl-tRNA formyltransferase (317 aa).

Ser-109–Pro-112 provides a ligand contact to (6S)-5,6,7,8-tetrahydrofolate.

It belongs to the Fmt family.

The enzyme catalyses L-methionyl-tRNA(fMet) + (6R)-10-formyltetrahydrofolate = N-formyl-L-methionyl-tRNA(fMet) + (6S)-5,6,7,8-tetrahydrofolate + H(+). In terms of biological role, attaches a formyl group to the free amino group of methionyl-tRNA(fMet). The formyl group appears to play a dual role in the initiator identity of N-formylmethionyl-tRNA by promoting its recognition by IF2 and preventing the misappropriation of this tRNA by the elongation apparatus. This Halalkalibacterium halodurans (strain ATCC BAA-125 / DSM 18197 / FERM 7344 / JCM 9153 / C-125) (Bacillus halodurans) protein is Methionyl-tRNA formyltransferase.